The following is a 279-amino-acid chain: Pantothenate synthetase (279 aa).

Residue 31–38 (MGNLHGGH) participates in ATP binding. His-38 functions as the Proton donor in the catalytic mechanism. Residue Gln-62 participates in (R)-pantoate binding. Beta-alanine is bound at residue Gln-62. Position 150–153 (150–153 (GRKD)) interacts with ATP. A (R)-pantoate-binding site is contributed by Gln-156. Residues Val-179 and 187 to 190 (KSSR) each bind ATP.

The protein belongs to the pantothenate synthetase family. As to quaternary structure, homodimer.

The protein resides in the cytoplasm. The enzyme catalyses (R)-pantoate + beta-alanine + ATP = (R)-pantothenate + AMP + diphosphate + H(+). It participates in cofactor biosynthesis; (R)-pantothenate biosynthesis; (R)-pantothenate from (R)-pantoate and beta-alanine: step 1/1. Catalyzes the condensation of pantoate with beta-alanine in an ATP-dependent reaction via a pantoyl-adenylate intermediate. The chain is Pantothenate synthetase from Stenotrophomonas maltophilia (strain K279a).